The primary structure comprises 207 residues: Small ribosomal subunit protein uS4 (207 aa).

The S4 RNA-binding domain maps to 97-160 (SRLDNVVYRM…KKQARIVEAL (64 aa)).

Belongs to the universal ribosomal protein uS4 family. In terms of assembly, part of the 30S ribosomal subunit. Contacts protein S5. The interaction surface between S4 and S5 is involved in control of translational fidelity.

In terms of biological role, one of the primary rRNA binding proteins, it binds directly to 16S rRNA where it nucleates assembly of the body of the 30S subunit. With S5 and S12 plays an important role in translational accuracy. The chain is Small ribosomal subunit protein uS4 from Burkholderia pseudomallei (strain 1106a).